The chain runs to 471 residues: MELGRTRNVHIVGIGGAGMSAIAELLLKSGFSVSGSDLASGEVIDKLRELGAVVWQGHEAEHVGMSDVVVYSSAVRPESNVEIQAAEKQGIPVIKRDEMLGELMRYKVGICVSGTHGKTTTTAMIATMLLESGQSPTVMIGGVSDYLKGSTVVGEGRHMVIEADEYDRAFLKLTPTIAVVNSLESEHMDTYGTMDNLRDSFAAFANKVPFYGRVICCVDWPEIRSLISRLNRRYTTFGIEEPADVMASDLEACEGGSVFTVEAFGESYPGVRLGVPGRHNVLNALAAFSVGLEIGLPPEKIIAGLGAYTGMRRRFQMKFKGGNGLLVVDDYAHHPSEVKATVKAARHGWKEHRIVAVFQPHLYSRTSEFAVEFGWALSRADAIYVAGIYPSRERTEDFPGVTGELVAEAARKAGAKEVTFEPDSEQLLDSLRQEAGPDTLILFMGAGDITHLATRFASMCADEGTATGAAG.

Glycine 114–threonine 120 lines the ATP pocket.

Belongs to the MurCDEF family.

The protein resides in the cytoplasm. The enzyme catalyses UDP-N-acetyl-alpha-D-muramate + L-alanine + ATP = UDP-N-acetyl-alpha-D-muramoyl-L-alanine + ADP + phosphate + H(+). Its pathway is cell wall biogenesis; peptidoglycan biosynthesis. In terms of biological role, cell wall formation. This is UDP-N-acetylmuramate--L-alanine ligase from Chlorobaculum parvum (strain DSM 263 / NCIMB 8327) (Chlorobium vibrioforme subsp. thiosulfatophilum).